The sequence spans 398 residues: Glucose-1-phosphate adenylyltransferase (398 aa).

Alpha-D-glucose 1-phosphate contacts are provided by residues Tyr100, Gly165, 180–181 (EK), and Ser191.

It belongs to the bacterial/plant glucose-1-phosphate adenylyltransferase family. Homotetramer.

The enzyme catalyses alpha-D-glucose 1-phosphate + ATP + H(+) = ADP-alpha-D-glucose + diphosphate. Its pathway is glycan biosynthesis; glycogen biosynthesis. In terms of biological role, involved in the biosynthesis of ADP-glucose, a building block required for the elongation reactions to produce glycogen. Catalyzes the reaction between ATP and alpha-D-glucose 1-phosphate (G1P) to produce pyrophosphate and ADP-Glc. In Desulfitobacterium hafniense (strain Y51), this protein is Glucose-1-phosphate adenylyltransferase.